The chain runs to 218 residues: Protein GrpE (218 aa).

Positions 1–75 are disordered; sequence MTTPNGMPDN…DVDPDLDGDG (75 aa). Basic and acidic residues predominate over residues 23 to 40; the sequence is SADRAEQAAEEAAARQAE. The segment covering 48-75 has biased composition (acidic residues); the sequence is SEEEISPELEAEINDLLSDVDPDLDGDG.

It belongs to the GrpE family. Homodimer.

The protein localises to the cytoplasm. In terms of biological role, participates actively in the response to hyperosmotic and heat shock by preventing the aggregation of stress-denatured proteins, in association with DnaK and GrpE. It is the nucleotide exchange factor for DnaK and may function as a thermosensor. Unfolded proteins bind initially to DnaJ; upon interaction with the DnaJ-bound protein, DnaK hydrolyzes its bound ATP, resulting in the formation of a stable complex. GrpE releases ADP from DnaK; ATP binding to DnaK triggers the release of the substrate protein, thus completing the reaction cycle. Several rounds of ATP-dependent interactions between DnaJ, DnaK and GrpE are required for fully efficient folding. In Corynebacterium glutamicum (strain ATCC 13032 / DSM 20300 / JCM 1318 / BCRC 11384 / CCUG 27702 / LMG 3730 / NBRC 12168 / NCIMB 10025 / NRRL B-2784 / 534), this protein is Protein GrpE.